The primary structure comprises 152 residues: uncharacterized protein (152 aa).

One can recognise a VOC domain in the interval 7-133 (PALSPHLVVD…FGHHWSLGQP (127 aa)).

This is an uncharacterized protein from Mycobacterium bovis (strain ATCC BAA-935 / AF2122/97).